Consider the following 664-residue polypeptide: NADH-ubiquinone oxidoreductase chain 5 (664 aa).

The next 17 membrane-spanning stretches (helical) occupy residues 2–22 (LLLTLIFLPFLGSVAAGLFGF), 28–48 (GSVFITTLTTFLSCIFSLIII), 77–97 (FLFDSLTMIMLVVVTSISTLV), 120–140 (LFTFFMIILVTGDNFMQMFVG), 168–188 (AMLVNRISDLILLLGVLTIFY), 210–230 (FIFFNYILSIIDVACILIFIG), 250–270 (GPTPVSALIHAATMVTAGVYL), 285–305 (LKIITIIGASTAFFASTVGLV), 321–341 (LGYMFFACGLSNYPLAIFHLS), 342–362 (NHAYFKALLFLCSGAVIHAMG), 376–396 (ILPFTYIMFLIGSLSLMGFPF), 424–444 (LGTIGAFFTAFYSTRLLFFAF), 462–482 (PLEMGIPLGLLAFGSIFIGYI), 521–541 (LPVILSFCGLFGAFYLYFFKF), 590–610 (IDKGLIEMCGPYGLTTIFSFL), 614–634 (IILLQTGYIYHYSLLMLISTI), and 639–659 (IIFFSIIYYFNIITILLFLFI).

This sequence belongs to the complex I subunit 5 family.

The protein localises to the mitochondrion inner membrane. It carries out the reaction a ubiquinone + NADH + 5 H(+)(in) = a ubiquinol + NAD(+) + 4 H(+)(out). Its function is as follows. Core subunit of the mitochondrial membrane respiratory chain NADH dehydrogenase (Complex I) that is believed to belong to the minimal assembly required for catalysis. Complex I functions in the transfer of electrons from NADH to the respiratory chain. The immediate electron acceptor for the enzyme is believed to be ubiquinone. The polypeptide is NADH-ubiquinone oxidoreductase chain 5 (ND5) (Phytophthora infestans (Potato late blight agent)).